Reading from the N-terminus, the 318-residue chain is Protein IMPACT-A (318 aa).

In terms of domain architecture, RWD spans aspartate 14–lysine 116. The interval glutamate 296–histidine 318 is disordered. Positions valine 308–histidine 318 are enriched in basic and acidic residues.

The protein belongs to the IMPACT family. Interacts with GCN1; prevents the interaction of GCN1 with EIF2AK4/GCN2 and inhibits EIF2AK4/GCN2 kinase activity. Interaction with RPL39; this interaction occurs in a GCN1-independent manner. Associates with ribosomes; this interaction occurs in a GCN1-independent manner. Associates with actin; this interaction occurs in a GCN1-independent manner.

It is found in the cytoplasm. Functionally, translational regulator that ensures constant high levels of translation upon a variety of stress conditions, such as amino acid starvation, UV-C irradiation, proteasome inhibitor treatment and glucose deprivation. Plays a role as a negative regulator of the EIF2AK4/GCN2 kinase activity; impairs GCN1-mediated EIF2AK4/GCN2 activation, and hence EIF2AK4/GCN2-mediated eIF-2-alpha phosphorylation and subsequent down-regulation of protein synthesis. Plays a role in differentiation of neuronal cells by stimulating neurite outgrowth. This Xenopus tropicalis (Western clawed frog) protein is Protein IMPACT-A (impact-A).